The following is a 717-amino-acid chain: Delta-1-pyrroline-5-carboxylate synthase (717 aa).

The tract at residues 1–296 (MDAVDSTRAF…WAPVGDVGAR (296 aa)) is glutamate 5-kinase. The substrate site is built by Ser-60, Asp-157, and Asn-176. Residues 196–197 (SD) and 236–242 (RGGMTAK) contribute to the ATP site. Residues 297 to 717 (DMAVAARESS…YTHKDLTSHA (421 aa)) form a gamma-glutamyl phosphate reductase region.

The protein in the N-terminal section; belongs to the glutamate 5-kinase family. It in the C-terminal section; belongs to the gamma-glutamyl phosphate reductase family. In terms of tissue distribution, expressed at high levels in leaves and is inducible in roots subjected to salt stress.

It carries out the reaction L-glutamate + ATP = L-glutamyl 5-phosphate + ADP. It catalyses the reaction L-glutamate 5-semialdehyde + phosphate + NADP(+) = L-glutamyl 5-phosphate + NADPH + H(+). The protein operates within amino-acid biosynthesis; L-proline biosynthesis; L-glutamate 5-semialdehyde from L-glutamate: step 1/2. Its pathway is amino-acid biosynthesis; L-proline biosynthesis; L-glutamate 5-semialdehyde from L-glutamate: step 2/2. Its activity is regulated as follows. Feedback regulated by proline. Its function is as follows. P5CS plays a key role in proline biosynthesis, leading to osmoregulation in plants. This is Delta-1-pyrroline-5-carboxylate synthase from Actinidia deliciosa (Kiwi).